Here is a 633-residue protein sequence, read N- to C-terminus: 1-deoxy-D-xylulose-5-phosphate synthase (633 aa).

Thiamine diphosphate is bound by residues His-72 and 113 to 115 (GHS). Asp-144 is a binding site for Mg(2+). Thiamine diphosphate contacts are provided by residues 145–146 (GA), Asn-173, Tyr-284, and Glu-367. Asn-173 contributes to the Mg(2+) binding site.

This sequence belongs to the transketolase family. DXPS subfamily. As to quaternary structure, homodimer. It depends on Mg(2+) as a cofactor. Requires thiamine diphosphate as cofactor.

It catalyses the reaction D-glyceraldehyde 3-phosphate + pyruvate + H(+) = 1-deoxy-D-xylulose 5-phosphate + CO2. The protein operates within metabolic intermediate biosynthesis; 1-deoxy-D-xylulose 5-phosphate biosynthesis; 1-deoxy-D-xylulose 5-phosphate from D-glyceraldehyde 3-phosphate and pyruvate: step 1/1. Its function is as follows. Catalyzes the acyloin condensation reaction between C atoms 2 and 3 of pyruvate and glyceraldehyde 3-phosphate to yield 1-deoxy-D-xylulose-5-phosphate (DXP). The chain is 1-deoxy-D-xylulose-5-phosphate synthase from Bacillus velezensis (strain DSM 23117 / BGSC 10A6 / LMG 26770 / FZB42) (Bacillus amyloliquefaciens subsp. plantarum).